The chain runs to 106 residues: Large ribosomal subunit protein uL24 (106 aa).

The tract at residues 1–20 (MNKRAKSKNREPLRKSPVKR) is disordered. Residues 8–20 (KNREPLRKSPVKR) show a composition bias toward basic and acidic residues.

This sequence belongs to the universal ribosomal protein uL24 family. Part of the 50S ribosomal subunit.

In terms of biological role, one of two assembly initiator proteins, it binds directly to the 5'-end of the 23S rRNA, where it nucleates assembly of the 50S subunit. Functionally, one of the proteins that surrounds the polypeptide exit tunnel on the outside of the subunit. In Methylacidiphilum infernorum (isolate V4) (Methylokorus infernorum (strain V4)), this protein is Large ribosomal subunit protein uL24.